The primary structure comprises 198 residues: Superoxide dismutase [Fe] (198 aa).

Residues His-27, His-74, Asp-157, and His-161 each contribute to the Fe cation site.

Belongs to the iron/manganese superoxide dismutase family. As to quaternary structure, homodimer. Requires Fe cation as cofactor.

The enzyme catalyses 2 superoxide + 2 H(+) = H2O2 + O2. Destroys superoxide anion radicals which are normally produced within the cells and which are toxic to biological systems. This is Superoxide dismutase [Fe] (sodB) from Pseudomonas putida (strain ATCC 47054 / DSM 6125 / CFBP 8728 / NCIMB 11950 / KT2440).